The sequence spans 84 residues: Mu-conotoxin-like Cal 12.2b (84 aa).

Positions 1-19 are cleaved as a signal peptide; the sequence is MKLTCVLVVLLLVLPFGDL. Positions 20–42 are excised as a propeptide; sequence ITTSNTEDNKRGATPWQNSLKAR. Cystine bridges form between C45–C57, C52–C65, C59–C70, and C64–C76. The residue at position 72 (W72) is a 6'-bromotryptophan. 4-hydroxyproline is present on P77. 6'-bromotryptophan is present on W81.

Belongs to the conotoxin O1 superfamily. In terms of tissue distribution, expressed by the venom duct.

Its subcellular location is the secreted. Mu-conotoxins block voltage-gated sodium channels. This toxin reversibly blocks voltage-gated sodium channel in cephalopods, with no alteration in the voltage dependence of sodium conductance or on the kinetics of inactivation. The polypeptide is Mu-conotoxin-like Cal 12.2b (Californiconus californicus (California cone)).